Reading from the N-terminus, the 178-residue chain is UPF0215 protein STK_03040 (178 aa).

It belongs to the UPF0215 family.

This is UPF0215 protein STK_03040 from Sulfurisphaera tokodaii (strain DSM 16993 / JCM 10545 / NBRC 100140 / 7) (Sulfolobus tokodaii).